The primary structure comprises 105 residues: Met repressor (105 aa).

This sequence belongs to the MetJ family. In terms of assembly, homodimer.

Its subcellular location is the cytoplasm. Functionally, this regulatory protein, when combined with SAM (S-adenosylmethionine) represses the expression of the methionine regulon and of enzymes involved in SAM synthesis. This is Met repressor from Pectobacterium carotovorum subsp. carotovorum (strain PC1).